The primary structure comprises 259 residues: Deoxyribose-phosphate aldolase (259 aa).

D102 serves as the catalytic Proton donor/acceptor. K167 (schiff-base intermediate with acetaldehyde) is an active-site residue. The Proton donor/acceptor role is filled by K201.

The protein belongs to the DeoC/FbaB aldolase family. DeoC type 2 subfamily.

It localises to the cytoplasm. It carries out the reaction 2-deoxy-D-ribose 5-phosphate = D-glyceraldehyde 3-phosphate + acetaldehyde. It functions in the pathway carbohydrate degradation; 2-deoxy-D-ribose 1-phosphate degradation; D-glyceraldehyde 3-phosphate and acetaldehyde from 2-deoxy-alpha-D-ribose 1-phosphate: step 2/2. In terms of biological role, catalyzes a reversible aldol reaction between acetaldehyde and D-glyceraldehyde 3-phosphate to generate 2-deoxy-D-ribose 5-phosphate. The chain is Deoxyribose-phosphate aldolase from Salmonella typhi.